Consider the following 291-residue polypeptide: ATP synthase gamma chain (291 aa).

This sequence belongs to the ATPase gamma chain family. As to quaternary structure, F-type ATPases have 2 components, CF(1) - the catalytic core - and CF(0) - the membrane proton channel. CF(1) has five subunits: alpha(3), beta(3), gamma(1), delta(1), epsilon(1). CF(0) has three main subunits: a, b and c.

The protein resides in the cell membrane. Functionally, produces ATP from ADP in the presence of a proton gradient across the membrane. The gamma chain is believed to be important in regulating ATPase activity and the flow of protons through the CF(0) complex. In Streptococcus equinus (Streptococcus bovis), this protein is ATP synthase gamma chain.